The following is a 446-amino-acid chain: MAFEGLADRLQQTISKIRGKGKVSEQDVKEMMREVRLALLEADVNFKVVKDFVKKVSERAVGQDVMKSLTPGQQVIKVVQEELTELMGGEESKIAVAKRPPTVIMMVGLQGAGKTTTSGKLANLLRKKHNRKPMLVAADIYRPAAIKQLETLGKQLDMPVFSLGDQVSPVEIAKQAIEKAKEEHYDYVILDTAGRLHIDHELMDELTNVKEIANPEEIFLVVDSMTGQDAVNVAKSFNEQLGLTGVVLTKLDGDTRGGAALSIRAVTNTPIKFAGLGEKLDALEPFHPERMASRILGMGDVLTLIEKAQASVDEDKAKELEQKMRTMSFTLDDFLEQLGQVRNMGPLDELLQMMPGAGKMKGLKNIQVDEKQLNHVEAIIKSMTVLEKEQPDIINASRRKRIAKGSGTSVQEVNRLLKQFDEMKKMMKQMTNMSKGKKKGFKLPFM.

Residues 108–115 (GLQGAGKT), 191–195 (DTAGR), and 249–252 (TKLD) contribute to the GTP site.

It belongs to the GTP-binding SRP family. SRP54 subfamily. Part of the signal recognition particle protein translocation system, which is composed of SRP and FtsY. Interacts with a small cytoplasmic RNA (sc-RNA).

The protein localises to the cytoplasm. It catalyses the reaction GTP + H2O = GDP + phosphate + H(+). Its function is as follows. Involved in targeting and insertion of nascent membrane proteins into the cytoplasmic membrane. Binds to the hydrophobic signal sequence of the ribosome-nascent chain (RNC) as it emerges from the ribosomes. The SRP-RNC complex is then targeted to the cytoplasmic membrane where it interacts with the SRP receptor FtsY. Interaction with FtsY leads to the transfer of the RNC complex to the Sec translocase for insertion into the membrane, the hydrolysis of GTP by both Ffh and FtsY, and the dissociation of the SRP-FtsY complex into the individual components. The chain is Signal recognition particle protein from Bacillus subtilis (strain 168).